The chain runs to 154 residues: SsrA-binding protein (154 aa).

This sequence belongs to the SmpB family.

Its subcellular location is the cytoplasm. Required for rescue of stalled ribosomes mediated by trans-translation. Binds to transfer-messenger RNA (tmRNA), required for stable association of tmRNA with ribosomes. tmRNA and SmpB together mimic tRNA shape, replacing the anticodon stem-loop with SmpB. tmRNA is encoded by the ssrA gene; the 2 termini fold to resemble tRNA(Ala) and it encodes a 'tag peptide', a short internal open reading frame. During trans-translation Ala-aminoacylated tmRNA acts like a tRNA, entering the A-site of stalled ribosomes, displacing the stalled mRNA. The ribosome then switches to translate the ORF on the tmRNA; the nascent peptide is terminated with the 'tag peptide' encoded by the tmRNA and targeted for degradation. The ribosome is freed to recommence translation, which seems to be the essential function of trans-translation. This is SsrA-binding protein from Treponema denticola (strain ATCC 35405 / DSM 14222 / CIP 103919 / JCM 8153 / KCTC 15104).